Here is a 116-residue protein sequence, read N- to C-terminus: Nucleoid-associated protein EUBELI_02017 (116 aa).

Gly residues predominate over residues M1 to P12. The interval M1–S42 is disordered. Over residues G13 to Q26 the composition is skewed to low complexity.

Belongs to the YbaB/EbfC family. As to quaternary structure, homodimer.

It is found in the cytoplasm. The protein resides in the nucleoid. Functionally, binds to DNA and alters its conformation. May be involved in regulation of gene expression, nucleoid organization and DNA protection. This is Nucleoid-associated protein EUBELI_02017 from Lachnospira eligens (strain ATCC 27750 / DSM 3376 / VPI C15-48 / C15-B4) (Eubacterium eligens).